A 343-amino-acid polypeptide reads, in one-letter code: Vancomycin/teicoplanin A-type resistance protein VanA (343 aa).

Residues lysine 133, phenylalanine 169–lysine 171, serine 177–serine 178, glutamate 207–glutamate 214, and phenylalanine 241 each bind ATP. Positions tyrosine 137–valine 338 constitute an ATP-grasp domain. Histidine 244 contacts substrate. Residue asparagine 304–glutamate 305 coordinates ATP. The Mg(2+) site is built by glutamate 305 and asparagine 307.

It belongs to the D-alanine--D-alanine ligase family. Mg(2+) is required as a cofactor. The cofactor is Mn(2+).

The protein resides in the cell membrane. The catalysed reaction is (R)-lactate + D-alanine + ATP = D-alanyl-(R)-lactate + ADP + phosphate. Required for high-level resistance to glycopeptide antibiotics. D-Ala--D-Ala ligase of altered specificity which catalyzes ester bond formation between D-Ala and various D-hydroxy acids; produces a peptidoglycan which does not terminate in D-alanine but in D-lactate, thus preventing vancomycin or teicoplanin binding. This Enterococcus faecium (Streptococcus faecium) protein is Vancomycin/teicoplanin A-type resistance protein VanA (vanA).